The chain runs to 485 residues: Ribulose bisphosphate carboxylase large chain (485 aa).

2 residues coordinate substrate: asparagine 124 and threonine 174. Catalysis depends on lysine 176, which acts as the Proton acceptor. Lysine 178 is a binding site for substrate. Positions 202, 204, and 205 each coordinate Mg(2+). Lysine 202 carries the post-translational modification N6-carboxylysine. Histidine 294 acts as the Proton acceptor in catalysis. Arginine 295, histidine 327, and serine 379 together coordinate substrate.

It belongs to the RuBisCO large chain family. Type I subfamily. As to quaternary structure, heterohexadecamer of 8 large chains and 8 small chains. It depends on Mg(2+) as a cofactor.

The enzyme catalyses 2 (2R)-3-phosphoglycerate + 2 H(+) = D-ribulose 1,5-bisphosphate + CO2 + H2O. It carries out the reaction D-ribulose 1,5-bisphosphate + O2 = 2-phosphoglycolate + (2R)-3-phosphoglycerate + 2 H(+). Functionally, ruBisCO catalyzes two reactions: the carboxylation of D-ribulose 1,5-bisphosphate, the primary event in carbon dioxide fixation, as well as the oxidative fragmentation of the pentose substrate. Both reactions occur simultaneously and in competition at the same active site. In Rhodopseudomonas palustris (strain HaA2), this protein is Ribulose bisphosphate carboxylase large chain.